The chain runs to 264 residues: tRNA-uridine aminocarboxypropyltransferase A (264 aa).

Zn(2+) contacts are provided by Cys-25, Cys-28, Cys-35, and Cys-37. The short motif at Asp-144–Trp-147 is the DXTW element. The interval Arg-245 to Glu-264 is disordered. Polar residues predominate over residues Gln-254 to Glu-264.

This sequence belongs to the TDD superfamily. DTWD2 family.

The catalysed reaction is a uridine in tRNA + S-adenosyl-L-methionine = a 3-[(3S)-3-amino-3-carboxypropyl]uridine in tRNA + S-methyl-5'-thioadenosine + H(+). In terms of biological role, catalyzes the formation of 3-(3-amino-3-carboxypropyl)uridine (acp3U) at position 20a in the D-loop of several cytoplasmic tRNAs (acp3U(20a)). This chain is tRNA-uridine aminocarboxypropyltransferase A, found in Arabidopsis thaliana (Mouse-ear cress).